The chain runs to 936 residues: Lon protease homolog, mitochondrial (936 aa).

Residues 1 to 40 (MYATRAIARRLERHAARCKGAHVARAVRGARARTTSAPRA) constitute a mitochondrion transit peptide. The disordered stretch occupies residues 65–95 (AFVSSVDGDGSTGSTGSSSSSSSSAFGDSAS). Residues 66-95 (FVSSVDGDGSTGSTGSSSSSSSSAFGDSAS) show a composition bias toward low complexity. Residues 112-352 (VLAVPLPRRP…ATLELLKKEV (241 aa)) enclose the Lon N-terminal domain. An ATP-binding site is contributed by 507–514 (GPPGVGKT). The 185-residue stretch at 748–932 (VTPPGVVTGL…DEVYRQALDW (185 aa)) folds into the Lon proteolytic domain. Active-site residues include Ser-838 and Lys-881.

This sequence belongs to the peptidase S16 family. In terms of assembly, homohexamer or homoheptamer. Organized in a ring with a central cavity.

It localises to the mitochondrion matrix. The enzyme catalyses Hydrolysis of proteins in presence of ATP.. Its function is as follows. ATP-dependent serine protease that mediates the selective degradation of misfolded, unassembled or oxidatively damaged polypeptides as well as certain short-lived regulatory proteins in the mitochondrial matrix. May also have a chaperone function in the assembly of inner membrane protein complexes. Participates in the regulation of mitochondrial gene expression and in the maintenance of the integrity of the mitochondrial genome. Binds to mitochondrial DNA in a site-specific manner. In Ostreococcus lucimarinus (strain CCE9901), this protein is Lon protease homolog, mitochondrial.